The primary structure comprises 793 residues: E3 ubiquitin-protein ligase UHRF1 (793 aa).

The Ubiquitin-like domain occupies 1-78 (MWIQVRTMDG…IQLLVRQSLV (78 aa)). 4 positions are modified to phosphoserine: serine 76, serine 91, serine 95, and serine 165. Positions 82–124 (STKERDSELSDTDSGCCLGQSESDKSSTHGEAAAETDSRPADE) are disordered. 2 tudor-like regions span residues 133-209 (GLYK…ARAR) and 216-283 (DLEV…IERP). A Glycyl lysine isopeptide (Lys-Gly) (interchain with G-Cter in SUMO2) cross-link involves residue lysine 279. Phosphoserine is present on serine 287. The segment at 296–301 (RKSGPS) is linker. Serine 298 is subject to Phosphoserine; by PKA. The PHD-type zinc finger occupies 310–366 (NRLCRVCACHLCGGRQDPDKQLMCDECDMAFHIYCLDPPLSSVPSEDEWYCPECRND). Histone H3R2me0 binding regions lie at residues 333 to 337 (CDECD) and 353 to 355 (PSE). At serine 368 the chain carries Phosphoserine. Lysine 385 participates in a covalent cross-link: Glycyl lysine isopeptide (Lys-Gly) (interchain with G-Cter in SUMO2). Lysine 399 bears the N6-acetyllysine mark. The region spanning 419-582 (GPIPGIPVGT…FLVWRYLLRR (164 aa)) is the YDG domain. The tract at residues 445 to 446 (HV) is required to promote base flipping. DNA contacts are provided by residues 463-464 (AG) and aspartate 469. Required for formation of a 5-methylcytosine-binding pocket stretches follow at residues 466–469 (YEDD) and 478–481 (YTGS). Position 546 is an N6-acetyllysine; alternate (lysine 546). A Glycyl lysine isopeptide (Lys-Gly) (interchain with G-Cter in SUMO2); alternate cross-link involves residue lysine 546. Residues 618–629 (REREKENSKREE) are compositionally biased toward basic and acidic residues. Residues 618 to 673 (REREKENSKREEEEQQEGGFASPRTGKGKWKRKSAGGGPSRAGSPRRTSKKTKVEP) form a disordered region. At serine 639 the chain carries Phosphoserine; by CDK1. Serine 651 carries the post-translational modification Phosphoserine. Lysine 670 participates in a covalent cross-link: Glycyl lysine isopeptide (Lys-Gly) (interchain with G-Cter in SUMO2). Serine 707 and serine 709 each carry phosphoserine. The segment at 724–763 (CICCQELVFRPITTVCQHNVCKDCLDRSFRAQVFSCPACR) adopts an RING-type zinc-finger fold.

In terms of assembly, interacts with DNMT3A and DNMT3B. Interacts with DNMT1; the interaction is direct. Interacts with USP7; leading to its deubiquitination. Interacts with histone H3. Interacts with HDAC1, but not with HDAC2. Interacts with BLTP3A. Interacts with PML. Interacts with EHMT2. Binds hemimethylated CpG containing oligonucleotides. Interacts with ZNF263; recruited to the SIX3 promoter along with other proteins involved in chromatin modification and transcriptional corepression where it contributes to transcriptional repression. Interacts with UHRF2. Interacts with FANCD2. Interacts with TET1 isoform 2; this interaction induces the recruitment of TET1 isoform 2 to replicating heterochromatin. In terms of processing, phosphorylation at Ser-298 of the linker region decreases the binding to H3K9me3. Phosphorylation at Ser-639 by CDK1 during M phase impairs interaction with USP7, preventing deubiquitination and leading to degradation by the proteasome. Ubiquitinated; which leads to proteasomal degradation. Autoubiquitinated; interaction with USP7 leads to deubiquitination and prevents degradation. Ubiquitination and degradation takes place during M phase, when phosphorylation at Ser-639 prevents interaction with USP7 and subsequent deubiquitination. Polyubiquitination may be stimulated by DNA damage. Expressed in thymus, bone marrow, testis, lung and heart. Overexpressed in breast cancer.

Its subcellular location is the nucleus. The catalysed reaction is S-ubiquitinyl-[E2 ubiquitin-conjugating enzyme]-L-cysteine + [acceptor protein]-L-lysine = [E2 ubiquitin-conjugating enzyme]-L-cysteine + N(6)-ubiquitinyl-[acceptor protein]-L-lysine.. It functions in the pathway protein modification; protein ubiquitination. In terms of biological role, multidomain protein that acts as a key epigenetic regulator by bridging DNA methylation and chromatin modification. Specifically recognizes and binds hemimethylated DNA at replication forks via its YDG domain and recruits DNMT1 methyltransferase to ensure faithful propagation of the DNA methylation patterns through DNA replication. In addition to its role in maintenance of DNA methylation, also plays a key role in chromatin modification: through its tudor-like regions and PHD-type zinc fingers, specifically recognizes and binds histone H3 trimethylated at 'Lys-9' (H3K9me3) and unmethylated at 'Arg-2' (H3R2me0), respectively, and recruits chromatin proteins. Enriched in pericentric heterochromatin where it recruits different chromatin modifiers required for this chromatin replication. Also localizes to euchromatic regions where it negatively regulates transcription possibly by impacting DNA methylation and histone modifications. Has E3 ubiquitin-protein ligase activity by mediating the ubiquitination of target proteins such as histone H3 and PML. It is still unclear how E3 ubiquitin-protein ligase activity is related to its role in chromatin in vivo. Plays a role in DNA repair by cooperating with UHRF2 to ensure recruitment of FANCD2 to interstrand cross-links (ICLs) leading to FANCD2 activation. Acts as a critical player of proper spindle architecture by catalyzing the 'Lys-63'-linked ubiquitination of KIF11, thereby controlling KIF11 localization on the spindle. This chain is E3 ubiquitin-protein ligase UHRF1 (UHRF1), found in Homo sapiens (Human).